The sequence spans 838 residues: Calmodulin-binding transcription activator 6 (838 aa).

The segment at residues 25–134 (VQTMLEEAKS…YRDTQEAATT (110 aa)) is a DNA-binding region (CG-1). Residues 525-554 (QGWTALHWAAYYGREKMVAALLSAGARPNL) form an ANK repeat. IQ domains lie at 671–700 (SIIAAMKIQNAFRKYDTRRKIEAAYRIQCR), 713–742 (MRRQAIRIQAAFRGLQARRQYKKILWSVGV), and 788–817 (LERSVVRVQAMFRSKKAQQDYRRMKLTHEE). The interval 738–760 (WSVGVLEKAVLRWRQKRKGFRGL) is calmodulin-binding. A coiled-coil region spans residues 802-822 (KKAQQDYRRMKLTHEEAQVNH).

The protein belongs to the CAMTA family. Expressed in roots, stems, leaves, sepals, petals, stamen filaments, top of carpels, anthers and siliques, but not in stigmas.

Its subcellular location is the nucleus. Its function is as follows. Transcription activator that binds calmodulin in a calcium-dependent manner in vitro. Binds to the DNA consensus sequence 5'-[ACG]CGCG[GTC]-3'. Regulates transcriptional activity in response to calcium signals. The sequence is that of Calmodulin-binding transcription activator 6 from Arabidopsis thaliana (Mouse-ear cress).